The following is a 474-amino-acid chain: tRNA-2-methylthio-N(6)-dimethylallyladenosine synthase (474 aa).

The MTTase N-terminal domain maps to 3–120 (QKLHIKTWGC…LPEMINQIRG (118 aa)). Residues cysteine 12, cysteine 49, cysteine 83, cysteine 157, cysteine 161, and cysteine 164 each coordinate [4Fe-4S] cluster. Residues 143 to 375 (RAEGPTAFVS…QERINQQAAQ (233 aa)) enclose the Radical SAM core domain. The TRAM domain maps to 378-441 (RRMLGTEQRV…TNSLRGEVVR (64 aa)).

The protein belongs to the methylthiotransferase family. MiaB subfamily. As to quaternary structure, monomer. The cofactor is [4Fe-4S] cluster.

It is found in the cytoplasm. It catalyses the reaction N(6)-dimethylallyladenosine(37) in tRNA + (sulfur carrier)-SH + AH2 + 2 S-adenosyl-L-methionine = 2-methylsulfanyl-N(6)-dimethylallyladenosine(37) in tRNA + (sulfur carrier)-H + 5'-deoxyadenosine + L-methionine + A + S-adenosyl-L-homocysteine + 2 H(+). Catalyzes the methylthiolation of N6-(dimethylallyl)adenosine (i(6)A), leading to the formation of 2-methylthio-N6-(dimethylallyl)adenosine (ms(2)i(6)A) at position 37 in tRNAs that read codons beginning with uridine. This Haemophilus influenzae (strain PittEE) protein is tRNA-2-methylthio-N(6)-dimethylallyladenosine synthase.